Consider the following 418-residue polypeptide: Histidine--tRNA ligase (418 aa).

The protein belongs to the class-II aminoacyl-tRNA synthetase family. In terms of assembly, homodimer.

The protein localises to the cytoplasm. It catalyses the reaction tRNA(His) + L-histidine + ATP = L-histidyl-tRNA(His) + AMP + diphosphate + H(+). The protein is Histidine--tRNA ligase of Thermoanaerobacter pseudethanolicus (strain ATCC 33223 / 39E) (Clostridium thermohydrosulfuricum).